The sequence spans 339 residues: NADH-quinone oxidoreductase subunit H (339 aa).

The next 9 helical transmembrane spans lie at 9-29, 50-70, 82-102, 115-135, 161-181, 187-207, 235-255, 275-295, and 311-331; these read IFPLIIIALKVVAITIPLILC, PNVVGPFGLLQPIADAVKLLF, ILFILAPMITFILSLIGWAVI, VGVLYILAISSLSVYGIIIAG, MGLVIITVLLTTGTLNLSEII, MPWWIDLMLLPMGVVFFISVL, MGFALFFLGEYANMILVSAMT, IPGFFWFVFKVGFLLFCFLWI, and GWKVFLPLTLFWVVLVSSVLV.

The protein belongs to the complex I subunit 1 family. NDH-1 is composed of 14 different subunits. Subunits NuoA, H, J, K, L, M, N constitute the membrane sector of the complex.

It is found in the cell membrane. The catalysed reaction is a quinone + NADH + 5 H(+)(in) = a quinol + NAD(+) + 4 H(+)(out). NDH-1 shuttles electrons from NADH, via FMN and iron-sulfur (Fe-S) centers, to quinones in the respiratory chain. The immediate electron acceptor for the enzyme in this species is believed to be ubiquinone. Couples the redox reaction to proton translocation (for every two electrons transferred, four hydrogen ions are translocated across the cytoplasmic membrane), and thus conserves the redox energy in a proton gradient. This subunit may bind ubiquinone. This chain is NADH-quinone oxidoreductase subunit H, found in Rickettsia africae (strain ESF-5).